The sequence spans 300 residues: GTPase Era (300 aa).

The Era-type G domain maps to 4–172 (KSGFVALAGK…LEKIKEELPE (169 aa)). The tract at residues 12–19 (GKPNVGKS) is G1. 12–19 (GKPNVGKS) is a binding site for GTP. The segment at 38-42 (QTTRN) is G2. The tract at residues 59-62 (DTPG) is G3. Residues 59 to 63 (DTPGI) and 121 to 124 (NKID) each bind GTP. The interval 121-124 (NKID) is G4. A G5 region spans residues 151-153 (ISA). Residues 195-280 (IREKIFHLTR…YLDLNVKVKE (86 aa)) enclose the KH type-2 domain.

This sequence belongs to the TRAFAC class TrmE-Era-EngA-EngB-Septin-like GTPase superfamily. Era GTPase family. In terms of assembly, monomer.

It is found in the cytoplasm. The protein resides in the cell inner membrane. An essential GTPase that binds both GDP and GTP, with rapid nucleotide exchange. Plays a role in 16S rRNA processing and 30S ribosomal subunit biogenesis and possibly also in cell cycle regulation and energy metabolism. The protein is GTPase Era of Thermotoga maritima (strain ATCC 43589 / DSM 3109 / JCM 10099 / NBRC 100826 / MSB8).